The chain runs to 312 residues: Acetyl-coenzyme A carboxylase carboxyl transferase subunit alpha (312 aa).

The region spanning 32 to 286 is the CoA carboxyltransferase C-terminal domain; it reads LLEERLARLR…KEALLKALEE (255 aa).

It belongs to the AccA family. In terms of assembly, acetyl-CoA carboxylase is a heterohexamer composed of biotin carboxyl carrier protein (AccB), biotin carboxylase (AccC) and two subunits each of ACCase subunit alpha (AccA) and ACCase subunit beta (AccD).

The protein localises to the cytoplasm. It carries out the reaction N(6)-carboxybiotinyl-L-lysyl-[protein] + acetyl-CoA = N(6)-biotinyl-L-lysyl-[protein] + malonyl-CoA. The protein operates within lipid metabolism; malonyl-CoA biosynthesis; malonyl-CoA from acetyl-CoA: step 1/1. Its function is as follows. Component of the acetyl coenzyme A carboxylase (ACC) complex. First, biotin carboxylase catalyzes the carboxylation of biotin on its carrier protein (BCCP) and then the CO(2) group is transferred by the carboxyltransferase to acetyl-CoA to form malonyl-CoA. The chain is Acetyl-coenzyme A carboxylase carboxyl transferase subunit alpha from Thermus thermophilus (strain ATCC BAA-163 / DSM 7039 / HB27).